The chain runs to 71 residues: Protein Tlp homolog (71 aa).

The disordered stretch occupies residues 30-56 (ETLQNNSLSRDQRQAIMEKNKRREESI). The segment covering 39–56 (RDQRQAIMEKNKRREESI) has biased composition (basic and acidic residues).

The protein belongs to the Tlp family.

The protein is Protein Tlp homolog of Desulforamulus reducens (strain ATCC BAA-1160 / DSM 100696 / MI-1) (Desulfotomaculum reducens).